A 269-amino-acid polypeptide reads, in one-letter code: Sororin (269 aa).

Disordered stretches follow at residues 1-39, 56-110, and 146-169; these read MSEGKKRSRGGLAIISPPKRRSQRKSTSDSPIPEPIMKR, VNTG…PKIN, and SLNSSSSLYSPTRKTDSSDTSTPN. The segment covering 57–66 has biased composition (polar residues); it reads NTGSQSTPKV. The KEN box motif lies at 85 to 87; it reads KEN. Residues 146–155 are compositionally biased toward low complexity; sequence SLNSSSSLYS. The FGF motif motif lies at 180-182; the sequence is FGF. The interval 247-269 is C-terminal Sororin domain; that stretch reads LDEWAAFMNAEFEEAEKFDLTVE.

The protein belongs to the sororin family. In terms of assembly, interacts with the APC/C complex. Interacts with the chromatin-bound cohesin complex; the interaction is indirect, occurs after DNA replication and requires acetylation of the cohesin component smc3. Interacts (via the FGF motif) with pds5a and pds5b; the interaction is direct and prevents the interaction of pds5a with wapl. In terms of processing, ubiquitinated by the APC/C complex in G1, leading to its degradation.

The protein localises to the nucleus. The protein resides in the chromosome. It is found in the cytoplasm. Regulator of sister chromatid cohesion in mitosis stabilizing cohesin complex association with chromatin. May antagonize the action of wapl which stimulates cohesin dissociation from chromatin. Cohesion ensures that chromosome partitioning is accurate in both meiotic and mitotic cells and plays an important role in DNA repair. Required for efficient DNA double-stranded break repair. The sequence is that of Sororin (cdca5-a) from Xenopus laevis (African clawed frog).